A 344-amino-acid chain; its full sequence is 4-hydroxy-3-methylbut-2-en-1-yl diphosphate synthase (flavodoxin) (344 aa).

Residues Cys-253, Cys-256, Cys-288, and Glu-295 each contribute to the [4Fe-4S] cluster site.

This sequence belongs to the IspG family. The cofactor is [4Fe-4S] cluster.

It catalyses the reaction (2E)-4-hydroxy-3-methylbut-2-enyl diphosphate + oxidized [flavodoxin] + H2O + 2 H(+) = 2-C-methyl-D-erythritol 2,4-cyclic diphosphate + reduced [flavodoxin]. It functions in the pathway isoprenoid biosynthesis; isopentenyl diphosphate biosynthesis via DXP pathway; isopentenyl diphosphate from 1-deoxy-D-xylulose 5-phosphate: step 5/6. Functionally, converts 2C-methyl-D-erythritol 2,4-cyclodiphosphate (ME-2,4cPP) into 1-hydroxy-2-methyl-2-(E)-butenyl 4-diphosphate. The polypeptide is 4-hydroxy-3-methylbut-2-en-1-yl diphosphate synthase (flavodoxin) (Thermotoga petrophila (strain ATCC BAA-488 / DSM 13995 / JCM 10881 / RKU-1)).